The sequence spans 813 residues: Striatin-interacting protein 1 homolog (813 aa).

Disordered stretches follow at residues 1 to 41 (MDGV…SEAP) and 307 to 379 (RAAS…RDEV). The span at 9 to 18 (NNKQKQNQML) shows a compositional bias: polar residues. Basic and acidic residues predominate over residues 22–35 (MRGEFTRNQRKDSE). Over residues 307–316 (RAASPPASAS) the composition is skewed to low complexity. Ser-310 bears the Phosphoserine mark. Residues 331-352 (KALIKQDNLDTFNEKDPYKADD) are compositionally biased toward basic and acidic residues. Positions 353 to 367 (SHEDEEENDDNDNSL) are enriched in acidic residues.

It belongs to the STRIP family. As to quaternary structure, part of the core of STRIPAK complexes composed of PP2A catalytic and scaffolding subunits, the striatins (PP2A regulatory subunits), the striatin-associated proteins MOB4, STRIP1 and STRIP2, PDCD10 and members of the STE20 kinases, such as STK24 and STK26.

It is found in the cytoplasm. In terms of biological role, plays a role in the regulation of cell morphology and cytoskeletal organization. Required in the cortical actin filament dynamics and cell shape. Part of the striatin-interacting phosphatase and kinase (STRIPAK) complexes. STRIPAK complexes have critical roles in protein (de)phosphorylation and are regulators of multiple signaling pathways including Hippo, MAPK, nuclear receptor and cytoskeleton remodeling. Different types of STRIPAK complexes are involved in a variety of biological processes such as cell growth, differentiation, apoptosis, metabolism and immune regulation. The polypeptide is Striatin-interacting protein 1 homolog (strip1) (Danio rerio (Zebrafish)).